We begin with the raw amino-acid sequence, 130 residues long: Zinc finger A20 and AN1 domain-containing stress-associated protein 10 (130 aa).

The segment at 4 to 38 (ETEALPCEGGCGLYGTRVNNNLCSLCYKKSVLQHS) adopts an A20-type zinc-finger fold. 12 residues coordinate Zn(2+): Cys10, Cys14, Cys26, Cys29, Cys71, Cys74, Cys85, Cys87, Cys92, His95, His101, and Cys103. Residues 65-111 (PVKKRRCGICKRKVGMLGFKCRCGHMFCGSHRYPEEHSCPFDYKQSG) form an AN1-type zinc finger.

Its function is as follows. May be involved in environmental stress response. The protein is Zinc finger A20 and AN1 domain-containing stress-associated protein 10 (SAP10) of Arabidopsis thaliana (Mouse-ear cress).